The primary structure comprises 393 residues: Protein TsgA homolog (393 aa).

12 consecutive transmembrane segments (helical) span residues Trp-11–Met-31, Phe-51–Pro-71, Phe-78–Leu-98, Ala-101–Ile-121, Leu-134–Tyr-154, Trp-162–Gly-182, Ile-206–Ile-226, Thr-245–Leu-265, Ile-273–Pro-293, Ala-297–Leu-317, Phe-332–Val-352, and Leu-361–Val-381.

It belongs to the major facilitator superfamily. TsgA family.

It is found in the cell inner membrane. This is Protein TsgA homolog from Citrobacter koseri (strain ATCC BAA-895 / CDC 4225-83 / SGSC4696).